The chain runs to 55 residues: Large ribosomal subunit protein bL33 (55 aa).

This sequence belongs to the bacterial ribosomal protein bL33 family.

The protein is Large ribosomal subunit protein bL33 of Methylobacterium radiotolerans (strain ATCC 27329 / DSM 1819 / JCM 2831 / NBRC 15690 / NCIMB 10815 / 0-1).